Here is a 227-residue protein sequence, read N- to C-terminus: UPF0758 protein lpg2489 (227 aa).

One can recognise an MPN domain in the interval 102–225; the sequence is RLSNTQQTYA…YSIFAENKWV (124 aa). Zn(2+)-binding residues include His173, His175, and Asp186. The short motif at 173–186 is the JAMM motif element; that stretch reads HNHPSGLSDASQQD.

The protein belongs to the UPF0758 family.

This Legionella pneumophila subsp. pneumophila (strain Philadelphia 1 / ATCC 33152 / DSM 7513) protein is UPF0758 protein lpg2489.